The sequence spans 189 residues: Cell division protein SepF (189 aa).

The segment covering 152–163 (FQEEPSPSSVMN) has biased composition (polar residues). Positions 152-189 (FQEEPSPSSVMNKDNEGPVSESVMAPEPAWGASVPSAI) are disordered.

Belongs to the SepF family. In terms of assembly, homodimer. Interacts with FtsZ.

The protein localises to the cytoplasm. Cell division protein that is part of the divisome complex and is recruited early to the Z-ring. Probably stimulates Z-ring formation, perhaps through the cross-linking of FtsZ protofilaments. Its function overlaps with FtsA. This is Cell division protein SepF from Prochlorococcus marinus (strain SARG / CCMP1375 / SS120).